A 910-amino-acid chain; its full sequence is Coatomer subunit beta'-2 (910 aa).

WD repeat units lie at residues 13-52 (QRSE…MVKS), 55-94 (VTEL…KVKV), 97-136 (AHTD…MCTQ), 140-180 (GHSH…PNFT), 183-224 (GHSK…CVQT), 227-266 (GHAH…LENT), 269-309 (YGLE…ASMD), 351-393 (TCDL…GSAL), and 461-501 (RIDV…SHLD). The segment at 882 to 910 (ADGSTDGAVLVNGNDTEEQWGTNNEESSA) is disordered. Over residues 900-910 (QWGTNNEESSA) the composition is skewed to polar residues.

It belongs to the WD repeat COPB2 family. In terms of assembly, oligomeric complex that consists of at least the alpha, beta, beta', gamma, delta, epsilon and zeta subunits.

Its subcellular location is the cytoplasm. The protein localises to the golgi apparatus membrane. It is found in the cytoplasmic vesicle. The protein resides in the COPI-coated vesicle membrane. The coatomer is a cytosolic protein complex that binds to dilysine motifs and reversibly associates with Golgi non-clathrin-coated vesicles, which further mediate biosynthetic protein transport from the ER, via the Golgi up to the trans Golgi network. Coatomer complex is required for budding from Golgi membranes, and is essential for the retrograde Golgi-to-ER transport of dilysine-tagged proteins. This is Coatomer subunit beta'-2 from Oryza sativa subsp. japonica (Rice).